Reading from the N-terminus, the 274-residue chain is Probable starch degradation products transport system permease protein AmyC (274 aa).

A run of 6 helical transmembrane segments spans residues 11–31 (LTFL…IILV), 73–93 (LIIT…TAYA), 103–123 (VIIY…VMIP), 139–159 (LVFM…YGAL), 184–204 (IILP…IMWI), and 238–258 (WNLG…FYFL). The region spanning 69–259 (FSNTLIITVF…LPVVIFYFLA (191 aa)) is the ABC transmembrane type-1 domain.

The protein belongs to the binding-protein-dependent transport system permease family. MalFG subfamily.

The protein localises to the cell membrane. Its function is as follows. Probably part of a binding-protein-dependent transport system starch degradation products. Probably responsible for the translocation of the substrate across the membrane. This chain is Probable starch degradation products transport system permease protein AmyC (amyC), found in Thermoanaerobacterium thermosulfurigenes (Clostridium thermosulfurogenes).